The chain runs to 573 residues: MASLFVSTPSSSLTLKSCHSLHLRRFDRAEFSNFGKASVNQTTRSRHSLRCSAEDDRVREPVNEAPSPVALAEEQKEDHDNNNAPPSPESSEEEEEKKSKQQEMDWKTDEEFKKFMGNPSIEAAIKLEKTRTDRKLKELNKESNSENPIIGIYNSLARDSLTKEKERLEKAEETFKALDLNKLKSCFGFDTFFATDVRRFGDGGIFIGNLRKPIDEVTPKLEAKLSEAAGRDVVVWFMEERSNEITKQVCMVQPKAEIDLQFESTRLSTPWGYVSAIALCVTTFGTIALMSGFFLKPDATFDDYIANVVPLFGGFLSILGVSEIATRVTAARHGVKLSPSFLVPSNWTGCLGVMNNYESLLPNKKALFDIPVARTASAYLTSLLLAAAAFISDGSFNGGDNALYIRPQFFDNNPLLSFVQFVVGPYADDLGNVLPNAVEGVGVPVDPLAFAGLLGMVVTSLNLLPCGRLEGGRIAQAMFGRSTAAILSFTTSLLLGIGGLSGSVLCLAWGLFATFFRGGEETPAKDEITPVGDDRFAWGIVLGLICFLTLFPNSGGTFSTSFFNGPFFRGDDF.

The transit peptide at 1–50 directs the protein to the chloroplast; the sequence is MASLFVSTPSSSLTLKSCHSLHLRRFDRAEFSNFGKASVNQTTRSRHSLR. The tract at residues 38–105 is disordered; that stretch reads SVNQTTRSRH…EKKSKQQEMD (68 aa). 2 stretches are compositionally biased toward basic and acidic residues: residues 52-62 and 96-105; these read SAEDDRVREPV and EKKSKQQEMD. Residues 122–185 adopt a coiled-coil conformation; it reads EAAIKLEKTR…KALDLNKLKS (64 aa). The next 7 helical transmembrane spans lie at 274–294, 305–325, 376–396, 414–434, 441–461, 493–513, and 536–556; these read VSAI…SGFF, IANV…SEIA, ASAY…DGSF, PLLS…GNVL, VGVP…VTSL, LLLG…GLFA, and FAWG…NSGG.

Belongs to the peptidase M50B family.

The protein localises to the plastid. Its subcellular location is the chloroplast membrane. Functionally, probable membrane-associated metalloprotease that may be involved in chloroplast development. In Arabidopsis thaliana (Mouse-ear cress), this protein is Probable zinc metallopeptidase EGY3, chloroplastic (EGY3).